The primary structure comprises 231 residues: 7-cyano-7-deazaguanine synthase (231 aa).

8–18 (FSGGQDSTTCL) contributes to the ATP binding site. Zn(2+) contacts are provided by C188, C197, C200, and C203.

The protein belongs to the QueC family. Zn(2+) is required as a cofactor.

The enzyme catalyses 7-carboxy-7-deazaguanine + NH4(+) + ATP = 7-cyano-7-deazaguanine + ADP + phosphate + H2O + H(+). It participates in purine metabolism; 7-cyano-7-deazaguanine biosynthesis. Functionally, catalyzes the ATP-dependent conversion of 7-carboxy-7-deazaguanine (CDG) to 7-cyano-7-deazaguanine (preQ(0)). The protein is 7-cyano-7-deazaguanine synthase of Escherichia fergusonii (strain ATCC 35469 / DSM 13698 / CCUG 18766 / IAM 14443 / JCM 21226 / LMG 7866 / NBRC 102419 / NCTC 12128 / CDC 0568-73).